Reading from the N-terminus, the 680-residue chain is Pescadillo homolog (680 aa).

The segment at 310–330 (LDQAKDEQTAETTEESSDTID) is disordered. Residues 351–470 (QAGSLFAPFT…KLVRPDLYSP (120 aa)) enclose the BRCT domain. A disordered region spans residues 472-680 (ATLPPHLSPW…RRKLEKGAAK (209 aa)). Positions 496–523 (AEQEEEGEAEMAEDSDEEMEEAADEKSK) form a coiled coil. The span at 497–518 (EQEEEGEAEMAEDSDEEMEEAA) shows a compositional bias: acidic residues. A compositionally biased stretch (basic and acidic residues) spans 519 to 529 (DEKSKTASKDE). Composition is skewed to acidic residues over residues 530–543 (AESE…DESV) and 551–585 (GTDD…DEEE). Residues 586–596 (VARTQHQKELE) show a composition bias toward basic and acidic residues. Residues 613-680 (ASKKKASQAK…RRKLEKGAAK (68 aa)) are a coiled coil. Positions 616 to 628 (KKASQAKKIAAKK) are enriched in basic residues. The segment covering 629 to 639 (RKEEEEIERQK) has biased composition (basic and acidic residues).

It belongs to the pescadillo family. Component of the NOP7 complex, composed of erb1, nop7 and ytm1. The complex is held together by erb1, which interacts with nop7 via its N-terminal domain and with ytm1 via a high-affinity interaction between the seven-bladed beta-propeller domains of the 2 proteins. The NOP7 complex associates with the 66S pre-ribosome.

It is found in the nucleus. It localises to the nucleolus. The protein localises to the nucleoplasm. In terms of biological role, component of the NOP7 complex, which is required for maturation of the 25S and 5.8S ribosomal RNAs and formation of the 60S ribosome. This is Pescadillo homolog (nop7) from Aspergillus clavatus (strain ATCC 1007 / CBS 513.65 / DSM 816 / NCTC 3887 / NRRL 1 / QM 1276 / 107).